The chain runs to 94 residues: DNA-directed RNA polymerase subunit omega (94 aa).

Belongs to the RNA polymerase subunit omega family. In terms of assembly, the RNAP catalytic core consists of 2 alpha, 1 beta, 1 beta' and 1 omega subunit. When a sigma factor is associated with the core the holoenzyme is formed, which can initiate transcription.

The catalysed reaction is RNA(n) + a ribonucleoside 5'-triphosphate = RNA(n+1) + diphosphate. Its function is as follows. Promotes RNA polymerase assembly. Latches the N- and C-terminal regions of the beta' subunit thereby facilitating its interaction with the beta and alpha subunits. In Tolumonas auensis (strain DSM 9187 / NBRC 110442 / TA 4), this protein is DNA-directed RNA polymerase subunit omega.